Reading from the N-terminus, the 918-residue chain is Chitin synthase C (918 aa).

Residues 1–63 form a disordered region; the sequence is MSYNRLGDPY…EMPSSDRLAE (63 aa). The segment covering 22-37 has biased composition (low complexity); it reads NPSSLSNRSPSPGRPL. 4 consecutive transmembrane segments (helical) span residues 562 to 581, 605 to 625, 637 to 657, and 672 to 692; these read WLNGSFFAAVYAITHFYQLW, LFAWFGIGNFFLVFHILTTYL, VLGVVFEWLYLATLVTCFVLS, and MVYLWVFIMIYLAFAAVFVTV. The N-linked (GlcNAc...) asparagine glycan is linked to N712. 3 consecutive transmembrane segments (helical) span residues 715-735, 845-865, and 890-910; these read FFSIIVSLGSTYVMWFIASII, VVLVWVFCNFALGAVVLSSAG, and VVLWSVAGLSIFKFLGAMWFL.

It belongs to the chitin synthase family. Class I subfamily. Mainly expressed in hyphae and conidiphores. Relatively strongly expressed in young cleistothecia and in mature ascospores, but negligible in Huelle cells.

The protein resides in the cell membrane. It localises to the cell septum. The protein localises to the cell tip. The enzyme catalyses [(1-&gt;4)-N-acetyl-beta-D-glucosaminyl](n) + UDP-N-acetyl-alpha-D-glucosamine = [(1-&gt;4)-N-acetyl-beta-D-glucosaminyl](n+1) + UDP + H(+). Polymerizes chitin, a structural polymer of the cell wall and septum, by transferring the sugar moiety of UDP-GlcNAc to the non-reducing end of the growing chitin polymer. ChsC and chsA share critical functions in hyphal wall integrity and differentiation. ChsA and chsC share also overlapping roles in septum formation. The polypeptide is Chitin synthase C (Emericella nidulans (strain FGSC A4 / ATCC 38163 / CBS 112.46 / NRRL 194 / M139) (Aspergillus nidulans)).